The sequence spans 329 residues: Mas-related G-protein coupled receptor member X2 (329 aa).

The Extracellular portion of the chain corresponds to 1 to 33 (MDPTTPAWGTESTTMNGNDQALPLFCGKETLIS). A helical transmembrane segment spans residues 34-54 (VFLILFIALVGLVGNGFVLWL). Residues 55–63 (LGFRMRKNA) are Cytoplasmic-facing. The helical transmembrane segment at 64-84 (FSVYVLSLAGADFLFLCFQII) threads the bilayer. At 85–96 (NCLVYLSNVFCS) the chain is on the extracellular side. The helical transmembrane segment at 97–117 (ISINFPSFFITVMTCAYLAGL) threads the bilayer. Residues 118-144 (SMLSTISTERCLSVLWPIWYRCRRPRH) are Cytoplasmic-facing. Residues 145–165 (LSAVACVLLWALSLLLSILEG) form a helical membrane-spanning segment. Over 166–183 (KFCGLFGDGDSGWCQTFD) the chain is Extracellular. A helical membrane pass occupies residues 184-204 (LITAAWLIFLFMVLCGSSLAL). Residues 205 to 227 (LVRILCGSRGLPLTRLYLTILLT) lie on the Cytoplasmic side of the membrane. The chain crosses the membrane as a helical span at residues 228-248 (VLVFLLCGLPFGIQWFLILWI). The Extracellular segment spans residues 249–263 (WKNSDVLFCHIHPVS). The chain crosses the membrane as a helical span at residues 264-284 (VVLSSLNSSANPIIYFFVGSF). Topologically, residues 285-329 (RKQWRLQQPILKLALQRALQDIAEVDHSEGCFRQGTPEMSRSSLV) are cytoplasmic.

The protein belongs to the G-protein coupled receptor 1 family. Mas subfamily.

It is found in the cell membrane. In terms of biological role, mast cell-specific receptor for basic secretagogues, i.e. cationic amphiphilic drugs, as well as endo- or exogenous peptides, consisting of a basic head group and a hydrophobic core. Recognizes and binds small molecules containing a cyclized tetrahydroisoquinoline (THIQ), such as non-steroidal neuromuscular blocking drugs (NMBDs), including tubocurarine and atracurium. In response to these compounds, mediates pseudo-allergic reactions characterized by histamine release, inflammation and airway contraction. The sequence is that of Mas-related G-protein coupled receptor member X2 (MRGPRX2) from Pan troglodytes (Chimpanzee).